The primary structure comprises 315 residues: Homoserine O-succinyltransferase (315 aa).

The active-site Acyl-thioester intermediate is the Cys142. Substrate contacts are provided by Lys163 and Ser192. His235 acts as the Proton acceptor in catalysis. The active site involves Glu237. Arg249 provides a ligand contact to substrate.

Belongs to the MetA family.

The protein localises to the cytoplasm. The enzyme catalyses L-homoserine + succinyl-CoA = O-succinyl-L-homoserine + CoA. Its pathway is amino-acid biosynthesis; L-methionine biosynthesis via de novo pathway; O-succinyl-L-homoserine from L-homoserine: step 1/1. Its function is as follows. Transfers a succinyl group from succinyl-CoA to L-homoserine, forming succinyl-L-homoserine. The protein is Homoserine O-succinyltransferase of Shewanella piezotolerans (strain WP3 / JCM 13877).